A 102-amino-acid chain; its full sequence is Acid shock protein (102 aa).

The signal sequence occupies residues 1 to 21 (MKKVLALVVAAAMGLSSAAFA). Over residues 22–41 (AETATTPAPTATTTKAAPAK) the composition is skewed to low complexity. Residues 22 to 58 (AETATTPAPTATTTKAAPAKTTHHKKQHKAAPAQKAQ) constitute a propeptide that is removed on maturation. Positions 22–102 (AETATTPAPT…PAKPAAQPAA (81 aa)) are disordered. A compositionally biased stretch (basic residues) spans 80 to 90 (AAKKHAGKHSH). The span at 91–102 (QQPAKPAAQPAA) shows a compositional bias: low complexity.

Belongs to the Asr family. In terms of processing, proteolytic processing gives rise to the active protein.

It is found in the periplasm. In terms of biological role, required for growth and/or survival at acidic conditions. The polypeptide is Acid shock protein (Escherichia coli (strain 55989 / EAEC)).